A 430-amino-acid chain; its full sequence is ASMFKHDHYMDNGVRYPNGDGICEQLNETKCDAGFSYDRSICEGPHYWHTISKCFIACGIGQRQSPINIVSYDAKFRQRLPKLKFKPHMEKLKTEVTNHQNRAPEFEPEDGENLYVKLNNLVDGHYKFHNLHVHNGRTRRKGSEHSVNGRFTPMEAHLVFHHDDQTHFEPTRTKLGGAFPGHNDFVVVGVFLEVGDDGFGDEPDDEECKRILKGHHPDNNENGNGDNGNNGYNGDNGNNGDNGNNGYNGDNGNNGVNGNNGYNGDNGNNGDNGNNGYNGDNGNNGDNGNNGENGNNGENGNNGENGHKHGCRVKKAKHLSTILECAYRNDKVREFKKVGEEEGLDVHLTPEMPLPPLKNRHYYTYEGSLTTPPCTESVLWVVQKCHVQVSRRVLHALRNVEGYKDGTTLRKYGTRRPTQKNKVTVYKSFK.

N-linked (GlcNAc...) asparagine glycosylation is present at N27. One can recognise an Alpha-carbonic anhydrase domain in the interval 33-429 (AGFSYDRSIC…KNKVTVYKSF (397 aa)). Residues H132, H134, and H157 each contribute to the Zn(2+) site. The disordered stretch occupies residues 201–312 (DEPDDEECKR…GENGHKHGCR (112 aa)). Residues 207–219 (ECKRILKGHHPDN) are compositionally biased toward basic and acidic residues. Over residues 220 to 304 (NENGNGDNGN…NNGENGNNGE (85 aa)) the composition is skewed to low complexity. A run of 27 repeats spans residues 225–227 (GDN), 228–230 (GNN), 231–233 (GYN), 234–236 (GDN), 237–239 (GNN), 240–242 (GDN), 243–245 (GNN), 246–248 (GYN), 249–251 (GDN), 252–254 (GNN), 255–257 (GVN), 258–260 (GNN), 261–263 (GYN), 264–266 (GDN), 267–269 (GNN), 270–272 (GDN), 273–275 (GNN), 276–278 (GYN), 279–281 (GDN), 282–284 (GNN), 285–287 (GDN), 288–290 (GNN), 291–293 (GEN), 294–296 (GNN), 297–299 (GEN), 300–301 (GN), and 303–305 (GEN). The tract at residues 225–305 (GDNGNNGYNG…NGENGNNGEN (81 aa)) is 27 X 3 AA approximate tandem repeats of G-X-N. 370 to 371 (TT) contacts substrate.

The protein belongs to the alpha-carbonic anhydrase family. Homooligomer; disulfide-linked. May also be disulfide-linked to insoluble organic matrix. It depends on Zn(2+) as a cofactor. Expressed in the mantle.

The protein localises to the secreted. It localises to the extracellular space. Its subcellular location is the extracellular matrix. It carries out the reaction hydrogencarbonate + H(+) = CO2 + H2O. In terms of biological role, acts as a negative regulator for calcification in the shells of mollusks. May function both as a calcium concentrator and as a carbonic anhydrase required for production of carbonate ions, which are assembled to CaCO(3) at mineralization sites. Is important for shell formation in both the calcitic prismatic layer and the aragonitic nacreous layer. Shows inhibitory activity of crystal formation when present in free state but, when attached to the insoluble matrix, may regulate the form and size of aragonite crystal. The polypeptide is Nacrein-like protein P2 (Mizuhopecten yessoensis (Japanese scallop)).